We begin with the raw amino-acid sequence, 319 residues long: UDP-N-acetylenolpyruvoylglucosamine reductase (319 aa).

Residues 35 to 198 (VGGPAEAMFK…TGCVLAGRPD (164 aa)) form the FAD-binding PCMH-type domain. R178 is an active-site residue. Residue S227 is the Proton donor of the active site. E302 is an active-site residue.

It belongs to the MurB family. It depends on FAD as a cofactor.

The protein resides in the cytoplasm. The enzyme catalyses UDP-N-acetyl-alpha-D-muramate + NADP(+) = UDP-N-acetyl-3-O-(1-carboxyvinyl)-alpha-D-glucosamine + NADPH + H(+). It participates in cell wall biogenesis; peptidoglycan biosynthesis. In terms of biological role, cell wall formation. The sequence is that of UDP-N-acetylenolpyruvoylglucosamine reductase from Rhodospirillum rubrum (strain ATCC 11170 / ATH 1.1.1 / DSM 467 / LMG 4362 / NCIMB 8255 / S1).